A 226-amino-acid polypeptide reads, in one-letter code: MIELRHVSHHYDERPVLRPLSLTLRERRIGVVGSNGSGKSTFARLLNALLLPAAGQVLVDGLDTRQDPKGVRRKVGFVFQNPDHQIVFPVVEEDLAFGLKNLKLPPAEVEARIGEVLERYDLGEYRQHPSHLLSGGQKQLLAISGVLVMRPEYVVFDEPTTLLDLRNRNRVAAAIRELPQTAIVVTHDLDLLRDFERVLVFEAGELIADAPPAEALRVYRERMTWP.

Positions 2–225 constitute an ABC transporter domain; sequence IELRHVSHHY…LRVYRERMTW (224 aa). ATP is bound at residue 33–40; sequence GSNGSGKS.

The protein belongs to the ABC transporter superfamily.

Its subcellular location is the cell membrane. Its function is as follows. Probably part of an ABC transporter complex. Responsible for energy coupling to the transport system. The polypeptide is Putative ABC transporter ATP-binding protein DR_2469 (Deinococcus radiodurans (strain ATCC 13939 / DSM 20539 / JCM 16871 / CCUG 27074 / LMG 4051 / NBRC 15346 / NCIMB 9279 / VKM B-1422 / R1)).